The chain runs to 328 residues: Cysteine proteinase COT44 (328 aa).

The propeptide at 1–99 (MSIYLRWSLE…KYSAAVNVDE (99 aa)) is activation peptide. 2 N-linked (GlcNAc...) asparagine glycosylation sites follow: asparagine 48 and asparagine 60. 3 cysteine pairs are disulfide-bonded: cysteine 121–cysteine 163, cysteine 155–cysteine 196, and cysteine 254–cysteine 305. Cysteine 124 is an active-site residue. Residues histidine 260 and asparagine 280 contribute to the active site.

This sequence belongs to the peptidase C1 family. In terms of tissue distribution, present in both cotyledons and axes.

May function in an early event in cortical cell differentiation. This chain is Cysteine proteinase COT44, found in Brassica napus (Rape).